The chain runs to 396 residues: Interleukin enhancer-binding factor 2 homolog (396 aa).

The DZF domain occupies 22-379 (KTFVPRHPFD…KKEGDLEEDI (358 aa)). A disordered region spans residues 367–396 (PTDKKEGDLEEDIDMIENENEEEGSDDGAE). Positions 374 to 396 (DLEEDIDMIENENEEEGSDDGAE) are enriched in acidic residues.

The protein localises to the nucleus. May regulate transcription of undefined genes. This is Interleukin enhancer-binding factor 2 homolog from Drosophila melanogaster (Fruit fly).